The primary structure comprises 233 residues: DnaA regulatory inactivator Hda (233 aa).

This sequence belongs to the DnaA family. HdA subfamily. In terms of assembly, the active form seems to be an ADP-bound monomer. Forms the RIDA complex (regulatory inactivation of DnaA) of ATP-DnaA, ADP-Hda and the DNA-loaded beta sliding clamp (dnaN).

Mediates the interaction of DNA replication initiator protein DnaA with DNA polymerase subunit beta sliding clamp (dnaN). Stimulates hydrolysis of ATP-DnaA to ADP-DnaA, rendering DnaA inactive for reinitiation, a process called regulatory inhibition of DnaA or RIDA. The protein is DnaA regulatory inactivator Hda of Photorhabdus laumondii subsp. laumondii (strain DSM 15139 / CIP 105565 / TT01) (Photorhabdus luminescens subsp. laumondii).